The primary structure comprises 350 residues: Ornithine cyclodeaminase (350 aa).

L-ornithine is bound by residues Arg-45 and Lys-69. NAD(+) is bound by residues Thr-84, Arg-112, 139 to 140 (AQ), Asp-161, Thr-202, 225 to 228 (VGGD), Lys-232, and Ser-293. Arg-112 serves as a coordination point for L-ornithine. L-ornithine is bound at residue Asp-228. The active-site Proton donor/acceptor is Asp-228. Val-294 lines the L-ornithine pocket. Residue Lys-331 participates in NAD(+) binding.

This sequence belongs to the ornithine cyclodeaminase/mu-crystallin family. Homodimer. Requires NAD(+) as cofactor.

It carries out the reaction L-ornithine = L-proline + NH4(+). Its pathway is amino-acid biosynthesis; L-proline biosynthesis; L-proline from L-ornithine: step 1/1. Functionally, catalyzes the conversion of L-ornithine into L-proline with release of ammonia. Is likely involved in the L-ornithine degradation pathway that allows P.putida to utilize this compound as sole carbon and nitrogen source. The protein is Ornithine cyclodeaminase of Pseudomonas putida (strain ATCC 47054 / DSM 6125 / CFBP 8728 / NCIMB 11950 / KT2440).